We begin with the raw amino-acid sequence, 953 residues long: Probable isoleucine--tRNA ligase, cytoplasmic (953 aa).

A 'HIGH' region motif is present at residues 45-55 (PFATGLPHYGH). Residues 634–638 (KMSKR) carry the 'KMSKS' region motif. Lys637 contacts ATP.

The protein belongs to the class-I aminoacyl-tRNA synthetase family.

The protein localises to the cytoplasm. It catalyses the reaction tRNA(Ile) + L-isoleucine + ATP = L-isoleucyl-tRNA(Ile) + AMP + diphosphate. This Enterocytozoon bieneusi (strain H348) (Microsporidian parasite) protein is Probable isoleucine--tRNA ligase, cytoplasmic.